The following is a 240-amino-acid chain: 2,3,4,5-tetrahydropyridine-2,6-dicarboxylate N-acetyltransferase (240 aa).

This sequence belongs to the transferase hexapeptide repeat family. DapH subfamily.

It carries out the reaction (S)-2,3,4,5-tetrahydrodipicolinate + acetyl-CoA + H2O = L-2-acetamido-6-oxoheptanedioate + CoA. It functions in the pathway amino-acid biosynthesis; L-lysine biosynthesis via DAP pathway; LL-2,6-diaminopimelate from (S)-tetrahydrodipicolinate (acetylase route): step 1/3. Its function is as follows. Catalyzes the transfer of an acetyl group from acetyl-CoA to tetrahydrodipicolinate. This chain is 2,3,4,5-tetrahydropyridine-2,6-dicarboxylate N-acetyltransferase, found in Shouchella clausii (strain KSM-K16) (Alkalihalobacillus clausii).